Consider the following 67-residue polypeptide: Major cold shock protein (67 aa).

One can recognise a CSD domain in the interval 4 to 64 (GTVKWFNAEK…GPKGLQAANV (61 aa)).

Its subcellular location is the cytoplasm. The sequence is that of Major cold shock protein (cspA) from Micrococcus luteus (strain ATCC 4698 / DSM 20030 / JCM 1464 / CCM 169 / CCUG 5858 / IAM 1056 / NBRC 3333 / NCIMB 9278 / NCTC 2665 / VKM Ac-2230) (Micrococcus lysodeikticus).